The chain runs to 28 residues: Potassium channel toxin alpha-KTx 9.5 (28 aa).

Intrachain disulfides connect cysteine 3/cysteine 19, cysteine 6/cysteine 24, and cysteine 10/cysteine 26. Valine 28 carries the valine amide modification.

Expressed by the venom gland.

It localises to the secreted. Blocks voltage-gated potassium channels Kv1.1/KCNA1 (IC(50)=145 nM), Kv1.2/KCNA2 (IC(50)=2.5 nM), and Kv1.3/KCNA3 (IC(50)=15). Also inhibits calcium-activated potassium channels (KCa/KCNN). The polypeptide is Potassium channel toxin alpha-KTx 9.5 (Buthus occitanus tunetanus (Common European scorpion)).